The following is a 502-amino-acid chain: MWSALFSHLREVHKRSGVKEEKLIMKSPPAAGEAGCHKPQATATNKMTVLQSPLGLRTILTSLVAFFIVVSSVSLLFDRGQDAQAQLAVEQHQHQEVLLKQKPASAAVGEQKSVVVDQSSLRSQEAQVQWTSELQDVATDSGDGGFDGEEDCNWSLGRWVYDNASRPLYSGLKCSFIFDEVACDKYGRNDTKYQHWRWQPHGCNLPRFNATKFLEKLRNKRLVFVGDSVNRNQWVSMVCMVEHFIPDGRKMRVYNGSLISFKAFEYNATIDFYWSPLLLESNSDNPIIHRVEYRIIRADRIEKHANVWKDADFIVFNSYLWWRKQRDGMMMKVMYGSFEDGDAKLDEVQMVDGYEIALKKLTEYLGANINKNKTRIFFAGSSPAHSWASNWGGDDNNKCLNETEPIQIEDYRSATTDYGMMDKAKEIFGTLEPKGIHVQILNITQLSEYRKDAHPTIFRRQYVPLTKEQIANPSIYADCTHWCLPGVPDVWNEFLYAYIMHK.

Residues 1-53 are Cytoplasmic-facing; it reads MWSALFSHLREVHKRSGVKEEKLIMKSPPAAGEAGCHKPQATATNKMTVLQSP. A helical; Signal-anchor for type II membrane protein membrane pass occupies residues 54 to 76; that stretch reads LGLRTILTSLVAFFIVVSSVSLL. The Lumenal portion of the chain corresponds to 77-502; sequence FDRGQDAQAQ…EFLYAYIMHK (426 aa). Intrachain disulfides connect Cys152/Cys203, Cys174/Cys239, Cys183/Cys483, and Cys399/Cys479. N-linked (GlcNAc...) asparagine glycans are attached at residues Asn153, Asn163, Asn189, and Asn209. The GDS motif signature appears at 226–228; it reads GDS. Catalysis depends on Ser228, which acts as the Nucleophile. N-linked (GlcNAc...) asparagine glycosylation is found at Asn255, Asn267, Asn372, Asn401, and Asn442. The active-site Proton donor is Asp478. The short motif at 478 to 481 is the DXXH motif element; it reads DCTH. The active-site Proton acceptor is His481.

It belongs to the PC-esterase family. TBL subfamily.

Its subcellular location is the golgi apparatus membrane. Xylan acetyltransferase required for 2-O- and 3-O-monoacetylation of xylosyl residues in xylan. Catalyzes the 2-O-acetylation of xylan, followed by nonenzymatic acetyl migration to the O-3 position, resulting in products that are monoacetylated at both O-2 and O-3 positions. This Oryza sativa subsp. japonica (Rice) protein is Xylan O-acetyltransferase 13.